Consider the following 732-residue polypeptide: Iron-sulfur clusters transporter ATM1, mitochondrial (732 aa).

The transit peptide at 1–55 directs the protein to the mitochondrion; that stretch reads MGFGSCSRHALFTPAAFSGSFTTMTTSCFKRVYTAQIHGGDALGKRLPSVSSFSG. Topologically, residues 56 to 143 are mitochondrial matrix; sequence QLPRHGLHRQ…KNNPNVKFRV (88 aa). Residues 71 to 114 are disordered; that stretch reads STSHRRQTSPPPSPRTTSQSPTVPSKASTTPPTSLNTSKPIATE. Low complexity predominate over residues 85–95; sequence RTTSQSPTVPS. The span at 96–114 shows a compositional bias: polar residues; that stretch reads KASTTPPTSLNTSKPIATE. Residues 144–164 form a helical membrane-spanning segment; the sequence is IGALTLLVAGKVLNVQVPFFF. Positions 144–432 constitute an ABC transmembrane type-1 domain; sequence IGALTLLVAG…LGTVYRELRQ (289 aa). The Mitochondrial intermembrane portion of the chain corresponds to 165–181; sequence KTIVDSLNVPITESTTV. Residues 182–202 traverse the membrane as a helical segment; that stretch reads WVLAGASIAGYGAARILTTLF. The Mitochondrial matrix portion of the chain corresponds to 203 to 262; sequence GELRNAVFASVAQNAIRKVARETFEHLLNMDMKFHLERQTGGLTRAIDRGTKGISFILSS. A helical transmembrane segment spans residues 263–283; sequence IVFHVIPTALEISMVCGILSW. Residue K284 is a topological domain, mitochondrial intermembrane. A helical membrane pass occupies residues 285–305; it reads FGWDFAAVTAITMLLYTWFTI. Topologically, residues 306-378 are mitochondrial matrix; the sequence is KTTAWRTTFR…SLAALNSGQN (73 aa). Glutathione contacts are provided by residues 311–315 and 374–377; these read RTTFR and NSGQ. The chain crosses the membrane as a helical span at residues 379–399; it reads FIFSSALTMMMLLGAQGIVKG. The Mitochondrial intermembrane portion of the chain corresponds to 400-405; that stretch reads TMTVGD. The chain crosses the membrane as a helical span at residues 406 to 426; that stretch reads LVLVNQLVFQLSLPLNFLGTV. G424 contributes to the glutathione binding site. Topologically, residues 427-732 are mitochondrial matrix; that stretch reads YRELRQSLID…LEVVDEKKKQ (306 aa). An ABC transporter domain is found at 466–702; that stretch reads IEFRNVAFAY…PGGVYHRLWQ (237 aa). Residues Y475 and 499–506 contribute to the ATP site; that span reads GPSGCGKS. The disordered stretch occupies residues 708–732; sequence STQPTDEEIERQREELEVVDEKKKQ. Residues 717 to 732 show a composition bias toward basic and acidic residues; that stretch reads ERQREELEVVDEKKKQ.

The protein belongs to the ABC transporter superfamily. ABCB family. Heavy Metal importer (TC 3.A.1.210) subfamily. In terms of assembly, homodimer.

It is found in the mitochondrion inner membrane. Functionally, performs an essential function in the generation of cytoplasmic iron-sulfur proteins by mediating the ATP-dependent export of mitochondrial Fe/S cluster precursors synthesized by NFS1 and other mitochondrial proteins. Hydrolyzes ATP. Binds glutathione and may function by transporting a glutathione-conjugated iron-sulfur compound. Plays a role during copper stress, in a manner dependent on the copper metalloregulatory transcription factor CUF1. The sequence is that of Iron-sulfur clusters transporter ATM1, mitochondrial from Cryptococcus neoformans var. grubii serotype A (strain H99 / ATCC 208821 / CBS 10515 / FGSC 9487) (Filobasidiella neoformans var. grubii).